The sequence spans 567 residues: Proline--tRNA ligase (567 aa).

Belongs to the class-II aminoacyl-tRNA synthetase family. ProS type 1 subfamily. Homodimer.

It is found in the cytoplasm. The enzyme catalyses tRNA(Pro) + L-proline + ATP = L-prolyl-tRNA(Pro) + AMP + diphosphate. Functionally, catalyzes the attachment of proline to tRNA(Pro) in a two-step reaction: proline is first activated by ATP to form Pro-AMP and then transferred to the acceptor end of tRNA(Pro). As ProRS can inadvertently accommodate and process non-cognate amino acids such as alanine and cysteine, to avoid such errors it has two additional distinct editing activities against alanine. One activity is designated as 'pretransfer' editing and involves the tRNA(Pro)-independent hydrolysis of activated Ala-AMP. The other activity is designated 'posttransfer' editing and involves deacylation of mischarged Ala-tRNA(Pro). The misacylated Cys-tRNA(Pro) is not edited by ProRS. This is Proline--tRNA ligase from Staphylococcus aureus (strain USA300).